The chain runs to 390 residues: GTPase Obg (390 aa).

Positions 1–159 constitute an Obg domain; the sequence is MKFVDEASIL…RELLLELMLL (159 aa). The disordered stretch occupies residues 127 to 147; it reads NTRFKSSVNRTPRQKTNGTPG. Over residues 129–145 the composition is skewed to polar residues; that stretch reads RFKSSVNRTPRQKTNGT. The OBG-type G domain maps to 160–333; it reads ADVGMLGMPN…LCWDVMTFII (174 aa). Residues 166–173, 191–195, 213–216, 283–286, and 314–316 contribute to the GTP site; these read GMPNAGKS, FTTLV, DIPG, NKID, and SAA. Mg(2+)-binding residues include Ser-173 and Thr-193.

Belongs to the TRAFAC class OBG-HflX-like GTPase superfamily. OBG GTPase family. As to quaternary structure, monomer. Mg(2+) is required as a cofactor.

The protein localises to the cytoplasm. In terms of biological role, an essential GTPase which binds GTP, GDP and possibly (p)ppGpp with moderate affinity, with high nucleotide exchange rates and a fairly low GTP hydrolysis rate. Plays a role in control of the cell cycle, stress response, ribosome biogenesis and in those bacteria that undergo differentiation, in morphogenesis control. This Escherichia coli O157:H7 protein is GTPase Obg.